The chain runs to 720 residues: Engulfment and cell motility protein 3 (720 aa).

Residues 307–479 (EQRDQLQALR…VVREQLARTL (173 aa)) enclose the ELMO domain. The region spanning 542–664 (RLCEGMLFRK…TDGLSALLGS (123 aa)) is the PH domain. The SH3-binding signature appears at 696 to 706 (PEQPPPVPPPP).

In terms of assembly, probably interacts directly with the SH3-domain of DOCK1 via its SH3-binding site. Part of a complex with DOCK1 and RAC1. Interacts with ADGRB3.

The protein resides in the cytoplasm. Its function is as follows. Involved in cytoskeletal rearrangements required for phagocytosis of apoptotic cells and cell motility. Acts in association with DOCK1 and CRK. Was initially proposed to be required in complex with DOCK1 to activate Rac Rho small GTPases. May enhance the guanine nucleotide exchange factor (GEF) activity of DOCK1. In Mus musculus (Mouse), this protein is Engulfment and cell motility protein 3 (Elmo3).